We begin with the raw amino-acid sequence, 244 residues long: 1-(5-phosphoribosyl)-5-[(5-phosphoribosylamino)methylideneamino] imidazole-4-carboxamide isomerase (244 aa).

The active-site Proton acceptor is Asp13. Asp132 acts as the Proton donor in catalysis.

This sequence belongs to the HisA/HisF family.

Its subcellular location is the cytoplasm. The catalysed reaction is 1-(5-phospho-beta-D-ribosyl)-5-[(5-phospho-beta-D-ribosylamino)methylideneamino]imidazole-4-carboxamide = 5-[(5-phospho-1-deoxy-D-ribulos-1-ylimino)methylamino]-1-(5-phospho-beta-D-ribosyl)imidazole-4-carboxamide. It functions in the pathway amino-acid biosynthesis; L-histidine biosynthesis; L-histidine from 5-phospho-alpha-D-ribose 1-diphosphate: step 4/9. The chain is 1-(5-phosphoribosyl)-5-[(5-phosphoribosylamino)methylideneamino] imidazole-4-carboxamide isomerase from Renibacterium salmoninarum (strain ATCC 33209 / DSM 20767 / JCM 11484 / NBRC 15589 / NCIMB 2235).